The sequence spans 239 residues: uncharacterized protein (239 aa).

Residues 104–127 (LPATSQSSQPKSTNSSTESSSIGQ) form a disordered region. The span at 107–127 (TSQSSQPKSTNSSTESSSIGQ) shows a compositional bias: low complexity. The stretch at 134–202 (ENEINLNKNK…HFIQNNQESF (69 aa)) forms a coiled coil. A helical membrane pass occupies residues 211–231 (VKIGSAFIIYIFYNVLFFIIV).

It is found in the membrane. This is an uncharacterized protein from Dictyostelium discoideum (Social amoeba).